The sequence spans 83 residues: Three-finger toxin MALT0052C (83 aa).

The first 21 residues, 1–21 (MKTLLLTLVVVTIVCLDFGHT), serve as a signal peptide directing secretion. 4 cysteine pairs are disulfide-bonded: C24–C45, C38–C62, C64–C75, and C76–C81.

It belongs to the three-finger toxin family. Short-chain subfamily. Type I alpha-neurotoxin sub-subfamily. Expressed by the venom gland.

It is found in the secreted. Its function is as follows. Binds to muscle nicotinic acetylcholine receptor (nAChR) and inhibit acetylcholine from binding to the receptor, thereby impairing neuromuscular transmission. The sequence is that of Three-finger toxin MALT0052C from Micrurus altirostris (Uruguayan coral snake).